Reading from the N-terminus, the 149-residue chain is MEVILLEKVRNLGNLGDKVHVKSGYGRNYLIPQNKAVFATEQNIELFEKRRAELEKKAQQALANAEQRAAKLNDTTIVISAMASDEGKLYGSVGVNEIKDALIEKQIEISKREIVMPEGPLHSIGNYVVEVHVHSDVVANLQVEIIPAK.

This sequence belongs to the bacterial ribosomal protein bL9 family.

In terms of biological role, binds to the 23S rRNA. The polypeptide is Large ribosomal subunit protein bL9 (Legionella pneumophila subsp. pneumophila (strain Philadelphia 1 / ATCC 33152 / DSM 7513)).